The primary structure comprises 264 residues: DNA-binding HTH-type transcriptional repressor TrmBL2 (264 aa).

Residues 81 to 113 (LEKFIEEWQERVKEELEAKKKAKEELIELMKPL) adopt a coiled-coil conformation.

This sequence belongs to the transcriptional regulator TrmB family.

It localises to the cytoplasm. The protein resides in the chromosome. Its function is as follows. An abundant chromosomal protein that seems to be involved in both genome architecture and transcription repression. Incubation with DNA in vitro gives fibrous structures 14.2 +/- 2.1 nm in thickness (naked DNA is 1.83 +/- 0.37 nm); does not significantly compact DNA. Binds to both coding and non-coding regions; binding within gene promoters correlates with decreased transcript levels, while binding within coding regions does not. The sequence is that of DNA-binding HTH-type transcriptional repressor TrmBL2 from Thermococcus kodakarensis (strain ATCC BAA-918 / JCM 12380 / KOD1) (Pyrococcus kodakaraensis (strain KOD1)).